A 154-amino-acid chain; its full sequence is Periplasmic nitrate reductase, electron transfer subunit (154 aa).

A signal peptide spans 1-24; the sequence is MSMHPALRLLATVLVALGAGPAFT. The interval 27–47 is disordered; sequence APRLTGADRPMSEVAAPPLPE. The heme c site is built by His68, Cys82, Cys85, His86, His103, Cys122, Cys125, and His126.

Belongs to the NapB family. In terms of assembly, component of the periplasmic nitrate reductase NapAB complex composed of NapA and NapB. Post-translationally, binds 2 heme C groups per subunit.

Its subcellular location is the periplasm. Its function is as follows. Electron transfer subunit of the periplasmic nitrate reductase complex NapAB. Receives electrons from the membrane-anchored tetraheme c-type NapC protein and transfers these to NapA subunit, thus allowing electron flow between membrane and periplasm. Essential for periplasmic nitrate reduction with nitrate as the terminal electron acceptor. This is Periplasmic nitrate reductase, electron transfer subunit from Cereibacter sphaeroides (Rhodobacter sphaeroides).